The following is a 337-amino-acid chain: Dihydroorotate dehydrogenase (quinone) (337 aa).

FMN contacts are provided by residues 62-66 (AGLDK) and T86. K66 contacts substrate. Residue 111–115 (NRFGF) participates in substrate binding. Residues N139 and N172 each contribute to the FMN site. N172 is a binding site for substrate. S175 (nucleophile) is an active-site residue. N177 contributes to the substrate binding site. FMN contacts are provided by K217 and T245. Position 246-247 (246-247 (NT)) interacts with substrate. FMN contacts are provided by residues G268, G297, and 318-319 (YS).

The protein belongs to the dihydroorotate dehydrogenase family. Type 2 subfamily. As to quaternary structure, monomer. FMN serves as cofactor.

It is found in the cell membrane. It carries out the reaction (S)-dihydroorotate + a quinone = orotate + a quinol. It functions in the pathway pyrimidine metabolism; UMP biosynthesis via de novo pathway; orotate from (S)-dihydroorotate (quinone route): step 1/1. In terms of biological role, catalyzes the conversion of dihydroorotate to orotate with quinone as electron acceptor. This is Dihydroorotate dehydrogenase (quinone) from Methylobacillus flagellatus (strain ATCC 51484 / DSM 6875 / VKM B-1610 / KT).